The sequence spans 422 residues: Acylglycerol kinase, mitochondrial (422 aa).

An N6-acetyllysine modification is found at Lys6. A hydrophobic region spans residues 15–31; sequence TTAGLCLLTWGGHWLYG. The DAGKc domain maps to 58–199; it reads AQVKKATVFL…LDVLQIKGEK (142 aa). Positions 249–271 are disordered; it reads QASISYTGPTERPPSEPEETPVQ.

This sequence belongs to the AGK family. In terms of assembly, component of the TIM22 complex, which core is composed of TIMM22, associated with TIMM10 (TIMM10A and/or TIMM10B), TIMM9, AGK and TIMM29. Interacts with SMIM26. Mg(2+) is required as a cofactor.

The protein localises to the mitochondrion inner membrane. The protein resides in the mitochondrion intermembrane space. It carries out the reaction a monoacylglycerol + ATP = a monoacyl-sn-glycero-3-phosphate + ADP + H(+). It catalyses the reaction a 1,2-diacyl-sn-glycerol + ATP = a 1,2-diacyl-sn-glycero-3-phosphate + ADP + H(+). The enzyme catalyses an N-acylsphing-4-enine + ATP = an N-acylsphing-4-enine 1-phosphate + ADP + H(+). The catalysed reaction is 1-(9Z-octadecenoyl)-sn-glycerol + ATP = 1-(9Z-octadecenoyl)-sn-glycero-3-phosphate + ADP + H(+). It carries out the reaction 1,2-di-(9Z-octadecenoyl)-sn-glycerol + ATP = 1,2-di-(9Z-octadecenoyl)-sn-glycero-3-phosphate + ADP + H(+). It catalyses the reaction a 1-acyl-sn-glycerol + ATP = a 1-acyl-sn-glycero-3-phosphate + ADP + H(+). The enzyme catalyses 1-hexadecanoyl-sn-glycerol + ATP = 1-hexadecanoyl-sn-glycero-3-phosphate + ADP + H(+). The catalysed reaction is a 2-acylglycerol + ATP = a 2-acyl-sn-glycerol 3-phosphate + ADP + H(+). It carries out the reaction 2-(5Z,8Z,11Z,14Z-eicosatetraenoyl)-glycerol + ATP = 2-(5Z,8Z,11Z,14Z-eicosatetraenoyl)-sn-glycero-3-phosphate + ADP + H(+). It catalyses the reaction 1-(5Z,8Z,11Z,14Z-eicosatetraenoyl)-sn-glycerol + ATP = 1-(5Z,8Z,11Z,14Z-eicosatetraenoyl)-sn-glycero-3-phosphate + ADP + H(+). The enzyme catalyses N-(hexanoyl)sphing-4-enine + ATP = N-hexanoylsphing-4-enine 1-phosphate + ADP + H(+). Its pathway is lipid metabolism; glycerolipid metabolism. Its function is as follows. Lipid kinase that can phosphorylate both monoacylglycerol and diacylglycerol to form lysophosphatidic acid (LPA) and phosphatidic acid (PA), respectively. Phosphorylates ceramide but not sphingosine. Phosphorylates 1,2-dioleoylglycerol more rapidly than 2,3-dioleoylglycerol. Independently of its lipid kinase activity, acts as a component of the TIM22 complex. The TIM22 complex mediates the import and insertion of multi-pass transmembrane proteins into the mitochondrial inner membrane by forming a twin-pore translocase that uses the membrane potential as the external driving force. In the TIM22 complex, required for the import of a subset of metabolite carriers into mitochondria, such as ANT1/SLC25A4 and SLC25A24, while it is not required for the import of TIMM23. Overexpression increases the formation and secretion of LPA, resulting in transactivation of EGFR and activation of the downstream MAPK signaling pathway, leading to increased cell growth. The chain is Acylglycerol kinase, mitochondrial from Pongo abelii (Sumatran orangutan).